The following is a 152-amino-acid chain: Small ribosomal subunit protein uS15 (152 aa).

Basic residues predominate over residues M1–K11. The interval M1–P22 is disordered.

This sequence belongs to the universal ribosomal protein uS15 family. As to quaternary structure, part of the 30S ribosomal subunit.

In Methanosarcina barkeri (strain Fusaro / DSM 804), this protein is Small ribosomal subunit protein uS15.